A 153-amino-acid chain; its full sequence is MAGKVLNKVMGFLGLEDEYEYEEYYEDTDELENSNESAEFEPIIHSNKKQGKVVSIHSTSTPKVSIVKPKTYDEVVDICDDLKDGKIVIVNSIELDPKVGQRLVDFVSGATYSLNGTLEEIEKGIYILSPSNVEVDSELKNQLSSKGMFSWNR.

It belongs to the SepF family. In terms of assembly, homodimer. Interacts with FtsZ.

It is found in the cytoplasm. Functionally, cell division protein that is part of the divisome complex and is recruited early to the Z-ring. Probably stimulates Z-ring formation, perhaps through the cross-linking of FtsZ protofilaments. Its function overlaps with FtsA. The polypeptide is Cell division protein SepF (Clostridium tetani (strain Massachusetts / E88)).